Here is a 230-residue protein sequence, read N- to C-terminus: Agamous-like MADS-box protein AGL11 (230 aa).

An MADS-box domain is found at 3-57; sequence RGKIEIKRIENSTNRQVTFCKRRNGLLKKAYELSVLCDAEVALIVFSTRGRLYEY. Positions 87–177 constitute a K-box domain; that stretch reads AAYYQQESAK…RTKVAEVERY (91 aa). Residues 211 to 230 are disordered; sequence SGSGNGGSYSDPDKKILHLG. Over residues 221-230 the composition is skewed to basic and acidic residues; it reads DPDKKILHLG.

As to quaternary structure, interacts with AGL15 and AGL16.

It is found in the nucleus. Functionally, probable transcription factor. Is required, together with TT16/AGL32 for the maternal control of endothelium formation, which is essential for female gametophyte development and fertilization, and seed formation. The polypeptide is Agamous-like MADS-box protein AGL11 (AGL11) (Arabidopsis thaliana (Mouse-ear cress)).